The sequence spans 695 residues: NADPH--cytochrome P450 reductase (695 aa).

Over 1-8 the chain is Lumenal; that stretch reads MAQLDTLD. Residues 9–31 form a helical membrane-spanning segment; that stretch reads LVVLVALLVGSVAYFTKGTYWAV. Topologically, residues 32 to 695 are cytoplasmic; the sequence is AKDPYASSGP…SGSYQEDVWS (664 aa). The region spanning 66–221 is the Flavodoxin-like domain; that stretch reads CVIFYGSQTG…DFLAWKEPMW (156 aa). FMN contacts are provided by residues 72-77, 123-126, 169-178, and Asp204; these read SQTGTA, ATYG, and LGNNTYEHYN. The FAD-binding FR-type domain occupies 277–538; sequence HNPFIAPIVE…HVRHSNFKLP (262 aa). Arg296 is an NADP(+) binding site. FAD-binding positions include 451–454, 469–471, and 486–489; these read RYYS, TAV, and GVTT. NADP(+) is bound by residues Thr552, 614 to 615, 620 to 624, and Glu656; these read SR and KVYVQ. Residue Trp694 participates in FAD binding.

The protein belongs to the NADPH--cytochrome P450 reductase family. In the N-terminal section; belongs to the flavodoxin family. It in the C-terminal section; belongs to the flavoprotein pyridine nucleotide cytochrome reductase family. The cofactor is FAD. FMN serves as cofactor.

It localises to the endoplasmic reticulum membrane. It is found in the mitochondrion outer membrane. Its subcellular location is the cell membrane. It carries out the reaction 2 oxidized [cytochrome P450] + NADPH = 2 reduced [cytochrome P450] + NADP(+) + H(+). This enzyme is required for electron transfer from NADP to cytochrome P450 in microsomes. It can also provide electron transfer to heme oxygenase and cytochrome B5. Involved in ergosterol biosynthesis. In Aspergillus oryzae (strain ATCC 42149 / RIB 40) (Yellow koji mold), this protein is NADPH--cytochrome P450 reductase.